The following is a 167-amino-acid chain: Early nodulin-like protein 16 (167 aa).

An N-terminal signal peptide occupies residues 1-24 (MARVAVLVAGAVLAFLLAATNVTA). The 102-residue stretch at 25–126 (KRWTVGDNKF…GMKLAVLVEK (102 aa)) folds into the Phytocyanin domain. 4 N-linked (GlcNAc...) asparagine glycosylation sites follow: Asn40, Asn71, Asn86, and Asn99. Residues Cys78 and Cys114 are joined by a disulfide bond. The GPI-anchor amidated asparagine moiety is linked to residue Asn138. Residues 139-167 (SARRTFSVSGFAYQFLIPVAVFAAVGTRY) constitute a propeptide, removed in mature form.

Belongs to the early nodulin-like (ENODL) family.

It is found in the cell membrane. In terms of biological role, may act as a carbohydrate transporter. This chain is Early nodulin-like protein 16, found in Arabidopsis thaliana (Mouse-ear cress).